Consider the following 655-residue polypeptide: UvrABC system protein C (655 aa).

The region spanning 16-95 (TDPGVYRFRD…IKEFAPRYNL (80 aa)) is the GIY-YIG domain. One can recognise a UVR domain in the interval 207–242 (KRFIGTLEKQMAEAVAELDYERAARLRDDVIALRKV).

This sequence belongs to the UvrC family. As to quaternary structure, interacts with UvrB in an incision complex.

It localises to the cytoplasm. Functionally, the UvrABC repair system catalyzes the recognition and processing of DNA lesions. UvrC both incises the 5' and 3' sides of the lesion. The N-terminal half is responsible for the 3' incision and the C-terminal half is responsible for the 5' incision. This chain is UvrABC system protein C, found in Renibacterium salmoninarum (strain ATCC 33209 / DSM 20767 / JCM 11484 / NBRC 15589 / NCIMB 2235).